The primary structure comprises 249 residues: Proteasome activator complex subunit 1 (249 aa).

The tract at residues P60–G102 is disordered. Basic and acidic residues predominate over residues P68 to G98.

The protein belongs to the PA28 family. As to quaternary structure, heterodimer of PSME1 and PSME2, which forms a hexameric ring. PSME1 can form homoheptamers.

In terms of biological role, implicated in immunoproteasome assembly and required for efficient antigen processing. The PA28 activator complex enhances the generation of class I binding peptides by altering the cleavage pattern of the proteasome. This chain is Proteasome activator complex subunit 1 (Psme1), found in Rattus norvegicus (Rat).